The sequence spans 345 residues: Biotin synthase (345 aa).

Residues 67–295 form the Radical SAM core domain; that stretch reads YKVQLASLLS…KSRIRLSAGR (229 aa). Residues cysteine 82, cysteine 86, and cysteine 89 each coordinate [4Fe-4S] cluster. [2Fe-2S] cluster contacts are provided by cysteine 126, cysteine 158, cysteine 218, and arginine 290.

Belongs to the radical SAM superfamily. Biotin synthase family. Homodimer. Requires [4Fe-4S] cluster as cofactor. [2Fe-2S] cluster is required as a cofactor.

It catalyses the reaction (4R,5S)-dethiobiotin + (sulfur carrier)-SH + 2 reduced [2Fe-2S]-[ferredoxin] + 2 S-adenosyl-L-methionine = (sulfur carrier)-H + biotin + 2 5'-deoxyadenosine + 2 L-methionine + 2 oxidized [2Fe-2S]-[ferredoxin]. It participates in cofactor biosynthesis; biotin biosynthesis; biotin from 7,8-diaminononanoate: step 2/2. Its function is as follows. Catalyzes the conversion of dethiobiotin (DTB) to biotin by the insertion of a sulfur atom into dethiobiotin via a radical-based mechanism. This Prochlorococcus marinus (strain NATL1A) protein is Biotin synthase.